Consider the following 85-residue polypeptide: UPF0291 protein SGO_0570 (85 aa).

Residues 56 to 85 (EDGNDVTPEKLRQVQREKGLHGRSLDDPNS) are disordered. The segment covering 62–85 (TPEKLRQVQREKGLHGRSLDDPNS) has biased composition (basic and acidic residues).

This sequence belongs to the UPF0291 family.

The protein localises to the cytoplasm. In Streptococcus gordonii (strain Challis / ATCC 35105 / BCRC 15272 / CH1 / DL1 / V288), this protein is UPF0291 protein SGO_0570.